We begin with the raw amino-acid sequence, 604 residues long: Threonine--tRNA ligase (604 aa).

Residues 197–499 (DHRKLGRELG…LIEEYAGDFP (303 aa)) form a catalytic region. Zn(2+) contacts are provided by Cys-296, His-347, and His-476.

Belongs to the class-II aminoacyl-tRNA synthetase family. As to quaternary structure, homodimer. Zn(2+) is required as a cofactor.

The protein localises to the cytoplasm. It carries out the reaction tRNA(Thr) + L-threonine + ATP = L-threonyl-tRNA(Thr) + AMP + diphosphate + H(+). Functionally, catalyzes the attachment of threonine to tRNA(Thr) in a two-step reaction: L-threonine is first activated by ATP to form Thr-AMP and then transferred to the acceptor end of tRNA(Thr). Also edits incorrectly charged L-seryl-tRNA(Thr). The sequence is that of Threonine--tRNA ligase from Synechococcus elongatus (strain ATCC 33912 / PCC 7942 / FACHB-805) (Anacystis nidulans R2).